Reading from the N-terminus, the 66-residue chain is Cold shock-like protein CspLB (66 aa).

A CSD domain is found at 4–63 (GTVKWFNSEKGFGFIEVEGGDDVFVHFSAIEGEGFKTLDEGQSVEFEIVEGQRGPQAEKV).

In terms of assembly, homodimer.

The protein localises to the cytoplasm. This Listeria monocytogenes serovar 1/2a (strain ATCC BAA-679 / EGD-e) protein is Cold shock-like protein CspLB (cspLB).